Consider the following 1340-residue polypeptide: Iron-sulfur cluster assembly protein SufD (1340 aa).

Residues 477–487 (NSLKHNNNNTK) show a composition bias toward low complexity. Disordered regions lie at residues 477–498 (NSLK…ERSS), 723–743 (HGKD…NYLN), 765–794 (NVST…QSTV), 835–865 (EKNE…GEKK), and 992–1055 (NIPT…NNIQ). Over residues 723–734 (HGKDNTQHDDKN) the composition is skewed to basic and acidic residues. Residues 782 to 794 (NPDTETNNEQSTV) are compositionally biased toward polar residues. Over residues 1022–1037 (DNLLQNDQATNSNVEI) the composition is skewed to polar residues.

The protein belongs to the iron-sulfur cluster assembly SufBD family. Component of a complex composed of SufB, SufC and SufD in a stoichiometric ratio of 1:2:1. Interacts with SufB. Interacts with SufC; the interaction enhances the ATPase activity of SufC.

The protein resides in the plastid. Its subcellular location is the apicoplast. Its pathway is cofactor biosynthesis; iron-sulfur cluster biosynthesis. In terms of biological role, participates in the sulfur mobilization (SUF) pathway for iron-sulfur (Fe-S) cluster biogenesis. As part of a complex consisting of SufB-SufC(2)-SufD, involved in assembly of [4Fe-4S] clusters. Enhances the ATPase activity of SufC. This Plasmodium berghei (strain Anka) protein is Iron-sulfur cluster assembly protein SufD.